The sequence spans 817 residues: Leucine--tRNA ligase (817 aa).

The 'HIGH' region signature appears at 42–52 (PYPSGKLHMGH). The 'KMSKS' region motif lies at 576 to 580 (KMSKS). ATP is bound at residue Lys579.

The protein belongs to the class-I aminoacyl-tRNA synthetase family.

The protein localises to the cytoplasm. It catalyses the reaction tRNA(Leu) + L-leucine + ATP = L-leucyl-tRNA(Leu) + AMP + diphosphate. The chain is Leucine--tRNA ligase from Methylobacillus flagellatus (strain ATCC 51484 / DSM 6875 / VKM B-1610 / KT).